A 138-amino-acid chain; its full sequence is U1 small nuclear ribonucleoprotein C (138 aa).

The Matrin-type zinc-finger motif lies at 4–36; sequence FYCDYCDTYLTHDSPSVRKTHCSGRKHKENVRD. At Tyr-8 the chain carries Phosphotyrosine. Ser-17 carries the phosphoserine modification. Lys-52 carries the N6-acetyllysine modification. Positions 62 to 99 are disordered; the sequence is IPPNLFSAPPLGGPMIPPPHPSMMGPPPPGMMPVGPPP. Positions 72–99 are enriched in pro residues; that stretch reads LGGPMIPPPHPSMMGPPPPGMMPVGPPP.

This sequence belongs to the U1 small nuclear ribonucleoprotein C family. As to quaternary structure, component of the U1 snRNP. The U1 snRNP is composed of the U1 snRNA and the 7 core Sm proteins SNRPB, SNRPD1, SNRPD2, SNRPD3, SNRPE, SNRPF and SNRPG that assemble in a heptameric protein ring on the Sm site of the small nuclear RNA to form the core snRNP, and at least 3 U1 snRNP-specific proteins SNRNP70/U1-70K, SNRPA/U1-A and SNRPC/U1-C. SNRPC/U1-C interacts with U1 snRNA and the 5' splice-site region of the pre-mRNA. Interacts (via N-terminus) with TIA1 (via C-terminus); thereby promoting spliceosomal U1 snRNP recruitment to 5' splice sites.

The protein localises to the nucleus. Component of the spliceosomal U1 snRNP, which is essential for recognition of the pre-mRNA 5' splice-site and the subsequent assembly of the spliceosome. SNRPC/U1-C is directly involved in initial 5' splice-site recognition for both constitutive and regulated alternative splicing. The interaction with the 5' splice-site seems to precede base-pairing between the pre-mRNA and the U1 snRNA. Stimulates commitment or early (E) complex formation by stabilizing the base pairing of the 5' end of the U1 snRNA and the 5' splice-site region. This chain is U1 small nuclear ribonucleoprotein C, found in Monodelphis domestica (Gray short-tailed opossum).